The chain runs to 367 residues: DNA replication and repair protein RecF (367 aa).

30 to 37 contacts ATP; it reads GSNGSGKT.

The protein belongs to the RecF family.

The protein localises to the cytoplasm. Functionally, the RecF protein is involved in DNA metabolism; it is required for DNA replication and normal SOS inducibility. RecF binds preferentially to single-stranded, linear DNA. It also seems to bind ATP. The sequence is that of DNA replication and repair protein RecF from Pseudomonas putida (strain ATCC 700007 / DSM 6899 / JCM 31910 / BCRC 17059 / LMG 24140 / F1).